The sequence spans 1282 residues: Protein crumbs homolog 2 (1282 aa).

An N-terminal signal peptide occupies residues 1-35 (MALVGPRIWGPRRDIYPLLLLLLLLLLLLLPWVPA). Residues 36–1221 (GLVPPETPSV…PLPLPFPLLE (1186 aa)) lie on the Extracellular side of the membrane. The region spanning 71 to 110 (ELGGCATQPCHHGALCVPQGPDPNSFRCYCVPGFQGPHCE) is the EGF-like 1 domain. Cystine bridges form between Cys-75–Cys-86, Cys-80–Cys-98, Cys-100–Cys-109, Cys-116–Cys-127, Cys-121–Cys-136, Cys-138–Cys-147, Cys-154–Cys-165, Cys-159–Cys-174, Cys-176–Cys-185, Cys-192–Cys-203, Cys-197–Cys-212, Cys-214–Cys-224, Cys-231–Cys-242, Cys-236–Cys-251, Cys-253–Cys-262, Cys-269–Cys-280, Cys-274–Cys-310, Cys-312–Cys-321, Cys-328–Cys-339, Cys-333–Cys-348, Cys-350–Cys-359, Cys-366–Cys-377, Cys-371–Cys-386, Cys-388–Cys-397, Cys-404–Cys-415, Cys-409–Cys-428, and Cys-430–Cys-439. In terms of domain architecture, EGF-like 2; calcium-binding spans 112–148 (DIDECASRPCQHGGTCQNLADHYECHCPLGYAGVTCE). The region spanning 150-186 (EVDECSSAPCLHGGSCLDGVGSYRCVCAPGYAGANCQ) is the EGF-like 3; calcium-binding domain. In terms of domain architecture, EGF-like 4; calcium-binding spans 188–225 (DVDECQSQPCAHGGVCHDLVNGFRCDCADTGYEGARCE). 2 consecutive EGF-like domains span residues 227–263 (EVLECASAPCAHNASCLDGFRSFRCLCWPGFSGERCE) and 265–322 (DEDE…NDCS). N-linked (GlcNAc...) asparagine glycosylation is present at Asn-239. O-linked (Glc...) serine glycosylation is present at Ser-271. In terms of domain architecture, EGF-like 7; calcium-binding spans 324-360 (DVDECASGPCLNGGSCQDLPNGFQCYCQDGYTGLTCQ). The 37-residue stretch at 362–398 (DMDECQSEPCLHGGTCSDTVAGYICQCPEAWGGHDCS) folds into the EGF-like 8; calcium-binding domain. An EGF-like 9 domain is found at 400 to 440 (QLTGCQGHTCPLAATCIPTFKSGLHGYFCRCPPGTYGPFCG). A glycan (N-linked (GlcNAc...) asparagine) is linked at Asn-442. A Laminin G-like 1 domain is found at 444 to 607 (TFSVVSGSSV…ELKGTVLLGC (164 aa)). Disulfide bonds link Cys-583/Cys-607, Cys-613/Cys-624, Cys-618/Cys-633, and Cys-635/Cys-644. An EGF-like 10 domain is found at 609 to 645 (RREPCQPLPCAHGGACVDLWTHFRCDCPRPYRGATCT). Residues 649–808 (PAATFGLGGA…GQSSNLTQGC (160 aa)) enclose the Laminin G-like 2 domain. 4 N-linked (GlcNAc...) asparagine glycosylation sites follow: Asn-672, Asn-693, Asn-789, and Asn-803. 4 disulfides stabilise this stretch: Cys-769-Cys-808, Cys-814-Cys-825, Cys-819-Cys-834, and Cys-836-Cys-845. The EGF-like 11 domain occupies 810 to 846 (SEDTCNPNPCFNGGTCHVTWNDFYCTCSENFTGPTCA). 4 N-linked (GlcNAc...) asparagine glycosylation sites follow: Asn-839, Asn-889, Asn-929, and Asn-1006. One can recognise a Laminin G-like 3 domain in the interval 872–1051 (VAEATFREGP…PGSPAVSLGC (180 aa)). Disulfide bonds link Cys-1010–Cys-1051, Cys-1057–Cys-1068, Cys-1062–Cys-1077, Cys-1079–Cys-1088, Cys-1095–Cys-1105, Cys-1100–Cys-1115, Cys-1117–Cys-1126, Cys-1135–Cys-1147, Cys-1141–Cys-1156, Cys-1158–Cys-1167, Cys-1174–Cys-1185, Cys-1179–Cys-1194, and Cys-1196–Cys-1205. 4 EGF-like domains span residues 1053–1089 (GGPVCSPSPCLHGGACRDLFDAFACSCGPAWEGPRCE), 1091–1127 (RADPCRSTPCVRGQCHARPDGRFECRCPPGFSGPRCR), 1131–1168 (LPQGCNLNSTCKDGAPCEGGPLGTNCSCQEGLAGLRCQ), and 1170–1206 (LDKPCEASPCLNGGTCRVASGIFECTCSAGFSGQFCE). 2 N-linked (GlcNAc...) asparagine glycosylation sites follow: Asn-1138 and Asn-1155. Residues 1222-1242 (VAVPAACACLLLLLLGLLSGI) traverse the membrane as a helical segment. Topologically, residues 1243–1282 (LAARKRRQSEGTYSPSQQEVAGARLEMDSVLKVPPEERLI) are cytoplasmic. The interaction with EPB41L5 stretch occupies residues 1246-1282 (RKRRQSEGTYSPSQQEVAGARLEMDSVLKVPPEERLI).

The protein belongs to the Crumbs protein family. Interacts (via intracellular domain) with EPB41L5. Post-translationally, O-glucosylated by POGLUT1 at Ser-271; consists of an O-glucose trisaccharide, in which the O-glucose is elongated by the addition of two xylose residues. O-glucosylation is required for localization at the plasma membrane. In the adult eye, strongly expressed in the outer nuclear layer, containing the cell bodies of the photoreceptor cells, and in the inner nuclear layer, containing the cell bodies of the horizontal, bipolar, amacrine, and Mueller glial cells. Also expressed in some cells in the ganglion cell layer (or may be displaced amacrine cells rather than ganglion cells).

The protein resides in the apical cell membrane. In terms of biological role, apical polarity protein that plays a central role during the epithelial-to-mesenchymal transition (EMT) at gastrulation, when newly specified mesodermal cells move inside the embryo. Acts by promoting cell ingression, the process by which cells leave the epithelial epiblast and move inside the embryo to form a new tissue layer. The anisotropic distribution of CRB2 and MYH10/myosin-IIB at cell edges define which cells will ingress: cells with high apical CRB2 are probably extruded from the epiblast by neighboring cells with high levels of apical MYH10/myosin-IIB. Also required for maintenance of the apical polarity complex during development of the cortex. The chain is Protein crumbs homolog 2 from Mus musculus (Mouse).